The primary structure comprises 218 residues: Small ribosomal subunit protein uS3c (218 aa).

The KH type-2 domain occupies 43-118 (IKDYVKKNKK…RLNIAITRIE (76 aa)).

The protein belongs to the universal ribosomal protein uS3 family. As to quaternary structure, part of the 30S ribosomal subunit.

Its subcellular location is the plastid. It localises to the chloroplast. This Phalaenopsis aphrodite subsp. formosana (Moth orchid) protein is Small ribosomal subunit protein uS3c (rps3).